The following is a 666-amino-acid chain: Probable cytochrome c oxidase subunit 1 (666 aa).

2 consecutive transmembrane segments (helical) span residues 16–36 (IPLI…VWVV) and 57–77 (IGVM…SDAI). His-105 is a binding site for heme b. 13 consecutive transmembrane segments (helical) span residues 108–128 (IMIF…VVPL), 142–162 (SVGF…LVIG), 192–212 (SLQI…TTVL), 234–254 (SNLL…MLLL), 277–297 (LIWA…FGIF), 315–335 (MVLA…HHFF), 346–366 (IFGI…YNWL), 380–400 (MLWA…GVLV), 413–433 (MFLV…GAFA), 456–476 (FWFT…AGML), 493–513 (WMLV…CQIM), 591–611 (SPTG…LIWH), and 612–632 (IWWM…VFAW). Residues His-283, Tyr-287, His-332, and His-333 each contribute to the Cu cation site. The segment at residues 283–287 (HPEVY) is a cross-link (1'-histidyl-3'-tyrosine (His-Tyr)). 2 residues coordinate heme b: His-418 and His-420.

This sequence belongs to the heme-copper respiratory oxidase family.

It localises to the cell membrane. The enzyme catalyses 4 Fe(II)-[cytochrome c] + O2 + 8 H(+)(in) = 4 Fe(III)-[cytochrome c] + 2 H2O + 4 H(+)(out). It participates in energy metabolism; oxidative phosphorylation. This Bradyrhizobium diazoefficiens (strain JCM 10833 / BCRC 13528 / IAM 13628 / NBRC 14792 / USDA 110) protein is Probable cytochrome c oxidase subunit 1.